The chain runs to 138 residues: Large ribosomal subunit protein uL16 (138 aa).

Basic residues predominate over residues 1-16 (MLIPRRVKHRKQHHPG). The disordered stretch occupies residues 1-24 (MLIPRRVKHRKQHHPGRSGAATGG).

This sequence belongs to the universal ribosomal protein uL16 family. In terms of assembly, part of the 50S ribosomal subunit.

Its function is as follows. Binds 23S rRNA and is also seen to make contacts with the A and possibly P site tRNAs. This chain is Large ribosomal subunit protein uL16, found in Arthrobacter sp. (strain FB24).